A 357-amino-acid chain; its full sequence is Protein RecA (357 aa).

79–86 contacts ATP; sequence GPESSGKT.

Belongs to the RecA family.

The protein localises to the cytoplasm. Functionally, can catalyze the hydrolysis of ATP in the presence of single-stranded DNA, the ATP-dependent uptake of single-stranded DNA by duplex DNA, and the ATP-dependent hybridization of homologous single-stranded DNAs. It interacts with LexA causing its activation and leading to its autocatalytic cleavage. This is Protein RecA from Chloroherpeton thalassium (strain ATCC 35110 / GB-78).